The sequence spans 734 residues: Sulfate transporter (734 aa).

The segment covering 1-18 has biased composition (basic and acidic residues); sequence MSLKNEDQNDLSPKDSVK. The segment at 1 to 38 is disordered; the sequence is MSLKNEDQNDLSPKDSVKGNDQYRAPSGIHLEPEEESR. 2 positions are modified to phosphoserine: Ser12 and Ser16. A run of 2 helical transmembrane segments spans residues 113–133 and 138–158; these read VMSGLIVGILLVPQSIAYSLL and PIYGLYTSFFASLIYFILGTS. Asn194 carries an N-linked (GlcNAc...) asparagine glycan. 6 helical membrane-spanning segments follow: residues 214-234, 237-257, 379-399, 415-435, 453-473, and 519-539; these read IIVGSTVTFVAGVYQVAMGFF, GFVSVYLSDALLGGFVTGASF, VDAIAIAIIGFAITVSLSEMF, AIGFCNIIPSFFHCFTTSAAL, VMTALVLLLVLLVIAPLFFSL, and LISTEIGLLTGVCFSMFCVIL. The STAS domain occupies 563 to 714; sequence AYKNLQAKSG…YSIYEAMTFA (152 aa).

The protein belongs to the SLC26A/SulP transporter (TC 2.A.53) family. In terms of processing, N-glycosylated.

It is found in the cell membrane. It localises to the apical cell membrane. It carries out the reaction oxalate(in) + sulfate(out) = oxalate(out) + sulfate(in). The enzyme catalyses sulfate(out) + 2 chloride(in) = sulfate(in) + 2 chloride(out). It catalyses the reaction oxalate(out) + 2 chloride(in) = oxalate(in) + 2 chloride(out). The catalysed reaction is bromide(in) + chloride(out) = bromide(out) + chloride(in). It carries out the reaction nitrate(in) + chloride(out) = nitrate(out) + chloride(in). The enzyme catalyses iodide(in) + chloride(out) = iodide(out) + chloride(in). Sulfate transporter which mediates sulfate uptake into chondrocytes in order to maintain adequate sulfation of proteoglycans which is needed for cartilage development. Mediates electroneutral anion exchange of sulfate ions for oxalate ions, sulfate and oxalate ions for chloride and/or hydroxyl ions and chloride ions for bromide, iodide and nitrate ions. The coupling of sulfate transport to both hydroxyl and chloride ions likely serves to ensure transport at both acidic pH when most sulfate uptake is mediated by sulfate-hydroxide exchange and alkaline pH when most sulfate uptake is mediated by sulfate-chloride exchange. Essential for chondrocyte proliferation, differentiation and cell size expansion. This Bos taurus (Bovine) protein is Sulfate transporter (SLC26A2).